Consider the following 204-residue polypeptide: Small ribosomal subunit protein uS7 (204 aa).

It belongs to the universal ribosomal protein uS7 family. In terms of assembly, part of the 30S ribosomal subunit.

Its function is as follows. One of the primary rRNA binding proteins, it binds directly to 16S rRNA where it nucleates assembly of the head domain of the 30S subunit. Is located at the subunit interface close to the decoding center. In Methanoregula boonei (strain DSM 21154 / JCM 14090 / 6A8), this protein is Small ribosomal subunit protein uS7.